We begin with the raw amino-acid sequence, 129 residues long: 3-aminoacrylate deaminase RutC (129 aa).

It belongs to the RutC family.

It carries out the reaction (Z)-3-aminoacrylate + H2O + H(+) = 3-oxopropanoate + NH4(+). In terms of biological role, involved in pyrimidine catabolism. Catalyzes the deamination of 3-aminoacrylate to malonic semialdehyde, a reaction that can also occur spontaneously. RutC may facilitate the reaction and modulate the metabolic fitness, rather than catalyzing essential functions. The chain is 3-aminoacrylate deaminase RutC from Caulobacter vibrioides (strain ATCC 19089 / CIP 103742 / CB 15) (Caulobacter crescentus).